The following is a 312-amino-acid chain: 3-methyl-2-oxobutanoate hydroxymethyltransferase (312 aa).

The protein belongs to the PanB family.

The catalysed reaction is 3-methyl-2-oxobutanoate + (6R)-5,10-methylene-5,6,7,8-tetrahydrofolate + H2O = 2-dehydropantoate + (6S)-5,6,7,8-tetrahydrofolate. It functions in the pathway cofactor biosynthesis; (R)-pantothenate biosynthesis; (R)-pantoate from 3-methyl-2-oxobutanoate: step 1/2. Its function is as follows. Probable 3-methyl-2-oxobutanoate hydroxymethyltransferase required for pantothenic acid biosynthesis. Acts downstream in the pantothenic acid pathway. In Saccharomyces cerevisiae (strain ATCC 204508 / S288c) (Baker's yeast), this protein is 3-methyl-2-oxobutanoate hydroxymethyltransferase.